Here is a 181-residue protein sequence, read N- to C-terminus: 6,7-dimethyl-8-ribityllumazine synthase (181 aa).

5-amino-6-(D-ribitylamino)uracil is bound by residues Phe24, Ser62–Glu64, and Ala86–Ile88. Gln91 to Thr92 contributes to the (2S)-2-hydroxy-3-oxobutyl phosphate binding site. The active-site Proton donor is the His94. Residue Phe119 coordinates 5-amino-6-(D-ribitylamino)uracil. Arg133 provides a ligand contact to (2S)-2-hydroxy-3-oxobutyl phosphate.

This sequence belongs to the DMRL synthase family.

It catalyses the reaction (2S)-2-hydroxy-3-oxobutyl phosphate + 5-amino-6-(D-ribitylamino)uracil = 6,7-dimethyl-8-(1-D-ribityl)lumazine + phosphate + 2 H2O + H(+). Its pathway is cofactor biosynthesis; riboflavin biosynthesis; riboflavin from 2-hydroxy-3-oxobutyl phosphate and 5-amino-6-(D-ribitylamino)uracil: step 1/2. In terms of biological role, catalyzes the formation of 6,7-dimethyl-8-ribityllumazine by condensation of 5-amino-6-(D-ribitylamino)uracil with 3,4-dihydroxy-2-butanone 4-phosphate. This is the penultimate step in the biosynthesis of riboflavin. The polypeptide is 6,7-dimethyl-8-ribityllumazine synthase (Microcystis aeruginosa (strain NIES-843 / IAM M-2473)).